We begin with the raw amino-acid sequence, 636 residues long: Threonine--tRNA ligase (636 aa).

A TGS domain is found at 1–59 (MPIITLPDGTKKIFEQVVSVEQVAKSMGLVKAALAGEVDGELVSTSFLIKTDANLTIIT). The catalytic stretch occupies residues 240–531 (DHRKIGKTQD…LIEHYEGAYP (292 aa)). 3 residues coordinate Zn(2+): C331, H382, and H508.

This sequence belongs to the class-II aminoacyl-tRNA synthetase family. In terms of assembly, homodimer. It depends on Zn(2+) as a cofactor.

It localises to the cytoplasm. The catalysed reaction is tRNA(Thr) + L-threonine + ATP = L-threonyl-tRNA(Thr) + AMP + diphosphate + H(+). Functionally, catalyzes the attachment of threonine to tRNA(Thr) in a two-step reaction: L-threonine is first activated by ATP to form Thr-AMP and then transferred to the acceptor end of tRNA(Thr). Also edits incorrectly charged L-seryl-tRNA(Thr). The sequence is that of Threonine--tRNA ligase from Vesicomyosocius okutanii subsp. Calyptogena okutanii (strain HA).